We begin with the raw amino-acid sequence, 171 residues long: Ribosome maturation factor RimM (171 aa).

The PRC barrel domain maps to 94 to 168 (NDEFYKDELI…MTIVPPEIVG (75 aa)).

The protein belongs to the RimM family. Binds ribosomal protein uS19.

It localises to the cytoplasm. Functionally, an accessory protein needed during the final step in the assembly of 30S ribosomal subunit, possibly for assembly of the head region. Essential for efficient processing of 16S rRNA. May be needed both before and after RbfA during the maturation of 16S rRNA. It has affinity for free ribosomal 30S subunits but not for 70S ribosomes. The protein is Ribosome maturation factor RimM of Anaplasma phagocytophilum (strain HZ).